The chain runs to 549 residues: Glucose-6-phosphate isomerase (549 aa).

Glu353 (proton donor) is an active-site residue. Active-site residues include His384 and Lys512.

It belongs to the GPI family.

It is found in the cytoplasm. It catalyses the reaction alpha-D-glucose 6-phosphate = beta-D-fructose 6-phosphate. Its pathway is carbohydrate biosynthesis; gluconeogenesis. The protein operates within carbohydrate degradation; glycolysis; D-glyceraldehyde 3-phosphate and glycerone phosphate from D-glucose: step 2/4. In terms of biological role, catalyzes the reversible isomerization of glucose-6-phosphate to fructose-6-phosphate. The protein is Glucose-6-phosphate isomerase of Alteromonas mediterranea (strain DSM 17117 / CIP 110805 / LMG 28347 / Deep ecotype).